The chain runs to 329 residues: Tyrosine recombinase XerC 1 (329 aa).

Positions A14–A101 constitute a Core-binding (CB) domain. A Tyr recombinase domain is found at R123–D320. Residues R163, K198, H272, R275, and H298 contribute to the active site. Y307 (O-(3'-phospho-DNA)-tyrosine intermediate) is an active-site residue.

The protein belongs to the 'phage' integrase family. XerC subfamily. Forms a cyclic heterotetrameric complex composed of two molecules of XerC and two molecules of XerD.

It localises to the cytoplasm. Site-specific tyrosine recombinase, which acts by catalyzing the cutting and rejoining of the recombining DNA molecules. The XerC-XerD complex is essential to convert dimers of the bacterial chromosome into monomers to permit their segregation at cell division. It also contributes to the segregational stability of plasmids. This Ralstonia nicotianae (strain ATCC BAA-1114 / GMI1000) (Ralstonia solanacearum) protein is Tyrosine recombinase XerC 1 (xerC1).